The primary structure comprises 412 residues: Palmitoyltransferase ZDHHC6 (412 aa).

At 1–24 (MNILSAIIVFENLHEVKRLFHWGP) the chain is on the cytoplasmic side. A helical transmembrane segment spans residues 25 to 45 (IIALTVIGVCSSMAILDSIIW). The Lumenal segment spans residues 46 to 57 (YWPLDTTGGSIN). The chain crosses the membrane as a helical span at residues 58–78 (FIMLINWTVLILYNYFNAMFV). At 79–143 (GPGYIPLEWK…NCCGHLNHAY (65 aa)) the chain is on the cytoplasmic side. Residues 99–149 (QFCRLCQGYKAPRSHHCRKCNRCVMKMDHHCPWINNCCGHLNHAYFTSFLL) form the DHHC domain. Catalysis depends on Cys129, which acts as the S-palmitoyl cysteine intermediate. A helical transmembrane segment spans residues 144–164 (FTSFLLLAPLGCIHAALIFIM). The Lumenal segment spans residues 165–205 (TMYTQLYDRISFGWSSVKIDMSAARHIHHPIMPFSIAAFAA). The helical transmembrane segment at 206-226 (TLFALGLALGTTIAVGMLFFI) threads the bilayer. Residues 227–412 (QMKVILRNRT…NSTSEEKKEQ (186 aa)) are Cytoplasmic-facing. Positions 313–398 (QRSVEYRVVE…PRRCVEKCLY (86 aa)) constitute an SH3 domain. S-palmitoyl cysteine attachment occurs at residues Cys328, Cys329, and Cys343. The Di-lysine motif signature appears at 409–412 (KKEQ).

Belongs to the DHHC palmitoyltransferase family.

It localises to the endoplasmic reticulum membrane. The enzyme catalyses L-cysteinyl-[protein] + hexadecanoyl-CoA = S-hexadecanoyl-L-cysteinyl-[protein] + CoA. The catalysed reaction is L-cysteinyl-[protein] + octadecanoyl-CoA = S-octadecanoyl-L-cysteinyl-[protein] + CoA. In terms of biological role, endoplasmic reticulum palmitoyl acyltransferase that probably catalyzes the addition of palmitate onto various protein substrates and is involved in a variety of cellular processes. Could also function as a stearoyltransferase. This chain is Palmitoyltransferase ZDHHC6, found in Danio rerio (Zebrafish).